We begin with the raw amino-acid sequence, 287 residues long: Neuferricin homolog (287 aa).

An N-terminal signal peptide occupies residues 1–22; sequence MFGLLRHLFKFQFLFVVAAVLG. The Cytochrome b5 heme-binding domain occupies 61 to 146; the sequence is GTLFTPAELA…KPDDLIGLAG (86 aa). The stretch at 175–204 forms a coiled coil; the sequence is YHHKFLELLEQARDAKRQVEELRARYPGCN.

Belongs to the cytochrome b5 family. MAPR subfamily.

It localises to the secreted. Its function is as follows. Heme-binding protein. The chain is Neuferricin homolog from Drosophila melanogaster (Fruit fly).